Reading from the N-terminus, the 343-residue chain is Fe-S cluster assembly protein DRE2 (343 aa).

The segment at 1-188 (MTVSRDSLVL…KKLTKKVSAI (188 aa)) is N-terminal SAM-like domain. The tract at residues 189-240 (KLTDSDLEDDDDDLESDDSANNSKTKFFDDFDDPETGDSIDEDDLIAETEED) is linker. Acidic residues-rich tracts occupy residues 195–206 (LEDDDDDLESDD) and 218–228 (DFDDPETGDSI). Positions 195 to 228 (LEDDDDDLESDDSANNSKTKFFDDFDDPETGDSI) are disordered. C247, C258, C261, and C263 together coordinate [2Fe-2S] cluster. The interval 247-263 (CGKSKQRRRKACKDCSC) is fe-S binding site A. Residues C306, C309, C317, and C320 each contribute to the [4Fe-4S] cluster site. 2 short sequence motifs (cx2C motif) span residues 306–309 (CGSC) and 317–320 (CSGC). A fe-S binding site B region spans residues 306-320 (CGSCALGDAFRCSGC).

The protein belongs to the anamorsin family. Monomer. Interacts with TAH18. Interacts with MIA40. [2Fe-2S] cluster is required as a cofactor. The cofactor is [4Fe-4S] cluster.

The protein localises to the cytoplasm. The protein resides in the mitochondrion intermembrane space. In terms of biological role, component of the cytosolic iron-sulfur (Fe-S) protein assembly (CIA) machinery required for the maturation of extramitochondrial Fe-S proteins. Part of an electron transfer chain functioning in an early step of cytosolic Fe-S biogenesis, facilitating the de novo assembly of a [4Fe-4S] cluster on the scaffold complex CFD1-NBP35. Electrons are transferred to DRE2 from NADPH via the FAD- and FMN-containing protein TAH18. TAH18-DRE2 are also required for the assembly of the diferric tyrosyl radical cofactor of ribonucleotide reductase (RNR), probably by providing electrons for reduction during radical cofactor maturation in the catalytic small subunit RNR2. The chain is Fe-S cluster assembly protein DRE2 from Kluyveromyces lactis (strain ATCC 8585 / CBS 2359 / DSM 70799 / NBRC 1267 / NRRL Y-1140 / WM37) (Yeast).